We begin with the raw amino-acid sequence, 384 residues long: Putative D-galactosamine-6-phosphate deaminase AgaS (384 aa).

SIS domains lie at 45-197 (LEPL…SQTF) and 215-364 (SEGV…PDTP).

The protein belongs to the SIS family. AgaS subfamily.

The enzyme catalyses D-galactosamine 6-phosphate + H2O = D-tagatopyranose 1-phosphate + NH4(+). Its function is as follows. Catalyzes the isomerization-deamination of galactosamine 6-phosphate to form tagatofuranose 6-phosphate and ammonium ion. In Escherichia coli (strain K12), this protein is Putative D-galactosamine-6-phosphate deaminase AgaS (agaS).